The following is a 180-amino-acid chain: ATP synthase subunit delta (180 aa).

It belongs to the ATPase delta chain family. In terms of assembly, F-type ATPases have 2 components, F(1) - the catalytic core - and F(0) - the membrane proton channel. F(1) has five subunits: alpha(3), beta(3), gamma(1), delta(1), epsilon(1). F(0) has three main subunits: a(1), b(2) and c(10-14). The alpha and beta chains form an alternating ring which encloses part of the gamma chain. F(1) is attached to F(0) by a central stalk formed by the gamma and epsilon chains, while a peripheral stalk is formed by the delta and b chains.

The protein resides in the cell membrane. F(1)F(0) ATP synthase produces ATP from ADP in the presence of a proton or sodium gradient. F-type ATPases consist of two structural domains, F(1) containing the extramembraneous catalytic core and F(0) containing the membrane proton channel, linked together by a central stalk and a peripheral stalk. During catalysis, ATP synthesis in the catalytic domain of F(1) is coupled via a rotary mechanism of the central stalk subunits to proton translocation. In terms of biological role, this protein is part of the stalk that links CF(0) to CF(1). It either transmits conformational changes from CF(0) to CF(1) or is implicated in proton conduction. The protein is ATP synthase subunit delta of Bacillus cereus (strain B4264).